A 620-amino-acid polypeptide reads, in one-letter code: MAENNGAVPPGCKLPAGGFFGRLHVLVVDDDAAYLEELKLMLLLAGYAVTGKTTAEEALKEVDQNPEDYFHIVMTDVHMSGMDGFDLLHRINGRVPVIMFSEGEDVVMVMRTVMNGACDYMVKPMTSEAIKFIWKHVLRWRLSALPANASSSLQPSDHLAAALAAVAPPPPPAVQLPAAPAQAGNRDGEAHEEAELSTQPPALVPSGVQEAAAAVWSSRGDGQEAPPPAVAAAAKAPSKKRGASEVSDRGSNNLEATTGRKKVRTRFTWTTVSHTSFVRAYEQLKDQEGPKKIKQLMELDGIFVTKTQVSSHLQKYRSWLENERKKEEATSSSPCNPLSYTNCLDRGYSTWKQSSVITEGQQSSSFSGRPIHSMATSNGCLTTTDTQAGNYVGVGAKEIENFISSHQRSLGTAIGQESTIEQASLHSEITSVSRDAHENGNSQARGSAMSNGTSGTRGVLVTNENLLHVVSASLPSNMGQPTQPSQSFCTNELAANYSIISDQNPGTSHPTSSSAINNQNSKTQEMSVSQTVELGCGNDVMLDWPELVGLEDQLDNDVLMNSFFDGDLLQQGVVTAIDGTQEMLAFDSTGDLGSVPPRGLNNEIASHENTNGKNGASSGP.

Residues 24–138 form the Response regulatory domain; that stretch reads HVLVVDDDAA…AIKFIWKHVL (115 aa). Asp-76 is subject to 4-aspartylphosphate. 2 disordered regions span residues 171–197 and 215–257; these read PPAV…AELS and VWSS…LEAT. The segment at residues 261–321 is a DNA-binding region (myb-like GARP); sequence KKVRTRFTWT…HLQKYRSWLE (61 aa). Over residues 431-456 the composition is skewed to polar residues; the sequence is SVSRDAHENGNSQARGSAMSNGTSGT. Disordered stretches follow at residues 431–457, 501–523, and 596–620; these read SVSR…SGTR, SDQN…NSKT, and PPRG…SSGP. Over residues 603-620 the composition is skewed to polar residues; sequence EIASHENTNGKNGASSGP.

It belongs to the ARR family. Type-B subfamily. Two-component system major event consists of a His-to-Asp phosphorelay between a sensor histidine kinase (HK) and a response regulator (RR). In plants, the His-to-Asp phosphorelay involves an additional intermediate named Histidine-containing phosphotransfer protein (HPt). This multistep phosphorelay consists of a His-Asp-His-Asp sequential transfer of a phosphate group between first a His and an Asp of the HK protein, followed by the transfer to a conserved His of the HPt protein and finally the transfer to an Asp in the receiver domain of the RR protein.

Its subcellular location is the nucleus. Its function is as follows. Transcriptional activator that binds specific DNA sequence. Functions as a response regulator involved in His-to-Asp phosphorelay signal transduction system. Phosphorylation of the Asp residue in the receiver domain activates the ability of the protein to promote the transcription of target genes. May directly activate some type-A response regulators in response to cytokinins. In Oryza sativa subsp. japonica (Rice), this protein is Two-component response regulator ORR27.